Consider the following 450-residue polypeptide: Phosphoglucosamine mutase (450 aa).

S102 acts as the Phosphoserine intermediate in catalysis. Mg(2+) is bound by residues S102, D243, D245, and D247. S102 carries the post-translational modification Phosphoserine.

This sequence belongs to the phosphohexose mutase family. Mg(2+) serves as cofactor. In terms of processing, activated by phosphorylation.

It carries out the reaction alpha-D-glucosamine 1-phosphate = D-glucosamine 6-phosphate. In terms of biological role, catalyzes the conversion of glucosamine-6-phosphate to glucosamine-1-phosphate. In Rhizobium etli (strain ATCC 51251 / DSM 11541 / JCM 21823 / NBRC 15573 / CFN 42), this protein is Phosphoglucosamine mutase.